A 301-amino-acid chain; its full sequence is NAD kinase (301 aa).

Aspartate 81 (proton acceptor) is an active-site residue. NAD(+) contacts are provided by residues 81-82 (DG), 155-156 (NE), histidine 166, arginine 183, aspartate 185, 196-201 (TAYSLS), and glutamine 256.

This sequence belongs to the NAD kinase family. Requires a divalent metal cation as cofactor.

Its subcellular location is the cytoplasm. The catalysed reaction is NAD(+) + ATP = ADP + NADP(+) + H(+). Involved in the regulation of the intracellular balance of NAD and NADP, and is a key enzyme in the biosynthesis of NADP. Catalyzes specifically the phosphorylation on 2'-hydroxyl of the adenosine moiety of NAD to yield NADP. The polypeptide is NAD kinase (Mannheimia succiniciproducens (strain KCTC 0769BP / MBEL55E)).